Here is an 85-residue protein sequence, read N- to C-terminus: Putative defensin-like protein 142 (85 aa).

The signal sequence occupies residues 1–24 (MKKSFLFTFTVLTIFTILVIGVAP). Intrachain disulfides connect Cys-30/Cys-78, Cys-41/Cys-63, Cys-46/Cys-73, and Cys-50/Cys-75.

This sequence belongs to the DEFL family.

It is found in the secreted. The protein is Putative defensin-like protein 142 (LCR34) of Arabidopsis thaliana (Mouse-ear cress).